The following is a 225-amino-acid chain: MPRHSRAKRAPRPSANNSKSPNDDDTAFRSPEPEDGTDYGLEFTTSQLTLQDNNRRSSTLRRDAGRRQPAARDSSTSGEEEDQENRYPTTRSPQTRRMTVQQESKTRAAGPVAAQNQTRRRKAANPMSRAKRMDREIRRLQHHPGTLIPKLPFSRLVREFIVKYSDDEPLRVTEGALLAMQESCEMYLTQRLADSYMLTKHRNRVTLEVRDMALMAYICDRGRQF.

Over residues M1–P11 the composition is skewed to basic residues. Residues M1–K131 are disordered. Residues F43–D52 are compositionally biased toward polar residues. S74 and S75 each carry phosphoserine. A Phosphothreonine modification is found at T76. Position 77 is a phosphoserine (S77). Polar residues predominate over residues R86–E103. Positions M133–F225 are H3-like.

It belongs to the histone H3 family. Forms a nucleosome-like histone octamer containing two molecules each of H2A, H2B, cid and H4 assembled in one cid-H4 heterotetramer and two H2A-H2B heterodimers. The cid-H4 heterotetramer is more compact and structurally more rigid than corresponding H3-H4 heterotetramers. Interacts with the condensin subunit Cap-G. Interacts with Chrac-14.

The protein resides in the nucleus. Its subcellular location is the chromosome. It is found in the centromere. It localises to the kinetochore. In terms of biological role, histone H3-like variant which exclusively replaces conventional H3 in the nucleosome core of centromeric chromatin at the inner plate of the kinetochore. Required for recruitment and assembly of kinetochore proteins, mitotic progression and chromosome segregation. May serve as an epigenetic mark that propagates centromere identity through replication and cell division. The protein is Histone H3-like centromeric protein cid of Drosophila melanogaster (Fruit fly).